Consider the following 438-residue polypeptide: uncharacterized protein (438 aa).

The N-terminal stretch at 1 to 19 (MKKLLLAASIICLASAGLA) is a signal peptide.

This is an uncharacterized protein from Rickettsia conorii (strain ATCC VR-613 / Malish 7).